Here is a 466-residue protein sequence, read N- to C-terminus: D-inositol 3-phosphate glycosyltransferase (466 aa).

Residues 1-12 (MRPMRAGAGAAG) are compositionally biased toward low complexity. The interval 1–22 (MRPMRAGAGAAGESCKDDGVRP) is disordered. His-43 is a binding site for 1D-myo-inositol 3-phosphate. UDP-N-acetyl-alpha-D-glucosamine contacts are provided by residues 49 to 50 (QP) and Gly-57. Residues 54–59 (DAGGMN), Lys-112, Tyr-145, Thr-169, and Arg-189 contribute to the 1D-myo-inositol 3-phosphate site. UDP-N-acetyl-alpha-D-glucosamine is bound by residues Arg-263, Lys-268, and Gln-321. Phe-330, His-331, and Val-333 together coordinate Mg(2+). UDP-N-acetyl-alpha-D-glucosamine contacts are provided by Glu-343 and Glu-351. Mg(2+) is bound at residue Thr-357. A disordered region spans residues 446 to 466 (VRDPVAARKPRRWTARRGVGA).

It belongs to the glycosyltransferase group 1 family. MshA subfamily. As to quaternary structure, homodimer.

The enzyme catalyses 1D-myo-inositol 3-phosphate + UDP-N-acetyl-alpha-D-glucosamine = 1D-myo-inositol 2-acetamido-2-deoxy-alpha-D-glucopyranoside 3-phosphate + UDP + H(+). In terms of biological role, catalyzes the transfer of a N-acetyl-glucosamine moiety to 1D-myo-inositol 3-phosphate to produce 1D-myo-inositol 2-acetamido-2-deoxy-glucopyranoside 3-phosphate in the mycothiol biosynthesis pathway. The protein is D-inositol 3-phosphate glycosyltransferase of Mycobacterium marinum (strain ATCC BAA-535 / M).